The chain runs to 289 residues: Serine/threonine-protein phosphatase Pgam5, mitochondrial (289 aa).

The helical transmembrane segment at Phe-7–Leu-23 threads the bilayer.

The protein belongs to the phosphoglycerate mutase family. BPG-dependent PGAM subfamily. In terms of assembly, interacts with Pk92B/ASK1.

The protein localises to the mitochondrion outer membrane. The enzyme catalyses O-phospho-L-seryl-[protein] + H2O = L-seryl-[protein] + phosphate. The catalysed reaction is O-phospho-L-threonyl-[protein] + H2O = L-threonyl-[protein] + phosphate. Its function is as follows. Displays phosphatase activity for serine/threonine residues, and dephosphorylates and activates Pk92B kinase. Has apparently no phosphoglycerate mutase activity. This chain is Serine/threonine-protein phosphatase Pgam5, mitochondrial (Pgam5), found in Drosophila melanogaster (Fruit fly).